The sequence spans 351 residues: DNA polymerase IV (351 aa).

Positions 4–185 (IIHVDMDCFF…LPLAKIPGVG (182 aa)) constitute a UmuC domain. Mg(2+) contacts are provided by D8 and D103. E104 is an active-site residue.

The protein belongs to the DNA polymerase type-Y family. As to quaternary structure, monomer. Requires Mg(2+) as cofactor.

It is found in the cytoplasm. The enzyme catalyses DNA(n) + a 2'-deoxyribonucleoside 5'-triphosphate = DNA(n+1) + diphosphate. Its function is as follows. Poorly processive, error-prone DNA polymerase involved in untargeted mutagenesis. Copies undamaged DNA at stalled replication forks, which arise in vivo from mismatched or misaligned primer ends. These misaligned primers can be extended by PolIV. Exhibits no 3'-5' exonuclease (proofreading) activity. May be involved in translesional synthesis, in conjunction with the beta clamp from PolIII. This Escherichia coli O157:H7 protein is DNA polymerase IV.